The primary structure comprises 100 residues: Urease subunit gamma (100 aa).

The protein belongs to the urease gamma subunit family. In terms of assembly, heterotrimer of UreA (gamma), UreB (beta) and UreC (alpha) subunits. Three heterotrimers associate to form the active enzyme.

Its subcellular location is the cytoplasm. It carries out the reaction urea + 2 H2O + H(+) = hydrogencarbonate + 2 NH4(+). It participates in nitrogen metabolism; urea degradation; CO(2) and NH(3) from urea (urease route): step 1/1. This Acinetobacter baylyi (strain ATCC 33305 / BD413 / ADP1) protein is Urease subunit gamma.